The primary structure comprises 657 residues: Methylenetetrahydrofolate reductase 1 (657 aa).

Residue Glu-18 is the Proton donor/acceptor of the active site. NAD(+) contacts are provided by residues Glu-18–Lys-23 and Thr-49–Trp-50. FAD-binding positions include Thr-49–Trp-50, His-78, and Arg-108–Asp-110. Substrate is bound at residue Asp-110. Ser-120 is modified (phosphoserine). FAD is bound by residues Tyr-129 to Ala-130, Tyr-152, Asp-171, and Lys-178. 2 residues coordinate substrate: Gln-189 and Tyr-286. Ser-301 bears the Phosphoserine mark. Residues Val-308–Asn-329 form a disordered region. The span at Ser-311–Ser-321 shows a compositional bias: acidic residues. Ser-358 carries the phosphoserine modification.

It belongs to the methylenetetrahydrofolate reductase family. FAD is required as a cofactor.

The catalysed reaction is (6S)-5-methyl-5,6,7,8-tetrahydrofolate + NADP(+) = (6R)-5,10-methylene-5,6,7,8-tetrahydrofolate + NADPH + H(+). The enzyme catalyses (6S)-5-methyl-5,6,7,8-tetrahydrofolate + NAD(+) = (6R)-5,10-methylene-5,6,7,8-tetrahydrofolate + NADH + H(+). The protein operates within one-carbon metabolism; tetrahydrofolate interconversion. This Saccharomyces cerevisiae (strain ATCC 204508 / S288c) (Baker's yeast) protein is Methylenetetrahydrofolate reductase 1 (MET12).